The chain runs to 310 residues: N-acetyl-gamma-glutamyl-phosphate reductase (310 aa).

Cys-117 is an active-site residue.

The protein belongs to the NAGSA dehydrogenase family. Type 2 subfamily.

It is found in the cytoplasm. It carries out the reaction N-acetyl-L-glutamate 5-semialdehyde + phosphate + NADP(+) = N-acetyl-L-glutamyl 5-phosphate + NADPH + H(+). It participates in amino-acid biosynthesis; L-arginine biosynthesis; N(2)-acetyl-L-ornithine from L-glutamate: step 3/4. Catalyzes the NADPH-dependent reduction of N-acetyl-5-glutamyl phosphate to yield N-acetyl-L-glutamate 5-semialdehyde. The chain is N-acetyl-gamma-glutamyl-phosphate reductase from Allorhizobium ampelinum (strain ATCC BAA-846 / DSM 112012 / S4) (Agrobacterium vitis (strain S4)).